The sequence spans 390 residues: MADLLKLCLRIAYAYGRLTGVINFKIDLKTGQALVTRGATLISVSTHLLIFALLLYQTMRKSVVNVMWKYANSLHEYVFLVIAGFRVVCVFLELVSRWSQRRTFVRLFNSFRRLYQRNPDIIQYCRRSIVSKFFCVTMTETLHIIVTLAMMRNRLSIALALRIWAVLSLTAIINVIITQYYVATACVRGRYALLNKDLQAIVTESQSLVPNGGGVFVTKCCYLADRLERIAKSQSDLQELVENLSTAYEGEVVCLVITYYLNMLGTSYLLFSISKYGNFGNNLLVIITLCGIVYFVFYVVDCWINAFNVFYLLDAHDKMVKLLNKRTLFQPGLDHRLEMVFENFALNLVRNPLKLHMYGLFEFGRGTSFAVFNSLLTHSLLLIQYDVQNF.

The Cytoplasmic segment spans residues 1–38 (MADLLKLCLRIAYAYGRLTGVINFKIDLKTGQALVTRG). A helical transmembrane segment spans residues 39–59 (ATLISVSTHLLIFALLLYQTM). Topologically, residues 60–75 (RKSVVNVMWKYANSLH) are extracellular. Residues 76–96 (EYVFLVIAGFRVVCVFLELVS) traverse the membrane as a helical segment. At 97–128 (RWSQRRTFVRLFNSFRRLYQRNPDIIQYCRRS) the chain is on the cytoplasmic side. Residues 129-149 (IVSKFFCVTMTETLHIIVTLA) traverse the membrane as a helical segment. The Extracellular segment spans residues 150–156 (MMRNRLS). Residues 157–177 (IALALRIWAVLSLTAIINVII) traverse the membrane as a helical segment. Over 178–252 (TQYYVATACV…NLSTAYEGEV (75 aa)) the chain is Cytoplasmic. A helical membrane pass occupies residues 253–273 (VCLVITYYLNMLGTSYLLFSI). Over 274–283 (SKYGNFGNNL) the chain is Extracellular. The chain crosses the membrane as a helical span at residues 284–304 (LVIITLCGIVYFVFYVVDCWI). Residues 305 to 366 (NAFNVFYLLD…MYGLFEFGRG (62 aa)) are Cytoplasmic-facing. A helical transmembrane segment spans residues 367–383 (TSFAVFNSLLTHSLLLI). Residues 384-390 (QYDVQNF) are Extracellular-facing.

It belongs to the insect chemoreceptor superfamily. Gustatory receptor (GR) family. Gr22e subfamily. Expressed in the adult labellar chemosensory neurons. In larvae, is expressed in neurons of the terminal external chemosensory organ as well as in the dorsal pharyngeal sense organ.

Its subcellular location is the cell membrane. Functionally, probable gustatory receptor which mediates acceptance or avoidance behavior, depending on its substrates. The polypeptide is Putative gustatory receptor 59d (Gr59d) (Drosophila melanogaster (Fruit fly)).